The chain runs to 244 residues: uncharacterized protein (244 aa).

The disordered stretch occupies residues 30-49 (RETNESPKSQNPSEEATTVN). Residues 35-49 (SPKSQNPSEEATTVN) show a composition bias toward polar residues. The next 4 membrane-spanning stretches (helical) occupy residues 96–116 (LWGT…LSNS), 128–148 (LLFI…FGLF), 171–191 (GFFI…TIAF), and 194–214 (FVTI…HPLS). A disordered region spans residues 224–244 (QLDGSGERKTDSSLVHQNPPN). Residues 235 to 244 (SSLVHQNPPN) are compositionally biased toward polar residues.

The protein localises to the nucleus membrane. This is an uncharacterized protein from Schizosaccharomyces pombe (strain 972 / ATCC 24843) (Fission yeast).